A 156-amino-acid polypeptide reads, in one-letter code: 6,7-dimethyl-8-ribityllumazine synthase (156 aa).

5-amino-6-(D-ribitylamino)uracil is bound by residues phenylalanine 22, alanine 57–glutamate 59, and serine 81–isoleucine 83. Residue glycine 86 to threonine 87 participates in (2S)-2-hydroxy-3-oxobutyl phosphate binding. The active-site Proton donor is the histidine 89. A 5-amino-6-(D-ribitylamino)uracil-binding site is contributed by phenylalanine 114. (2S)-2-hydroxy-3-oxobutyl phosphate is bound at residue arginine 128.

It belongs to the DMRL synthase family. In terms of assembly, forms an icosahedral capsid composed of 60 subunits, arranged as a dodecamer of pentamers.

It catalyses the reaction (2S)-2-hydroxy-3-oxobutyl phosphate + 5-amino-6-(D-ribitylamino)uracil = 6,7-dimethyl-8-(1-D-ribityl)lumazine + phosphate + 2 H2O + H(+). The protein operates within cofactor biosynthesis; riboflavin biosynthesis; riboflavin from 2-hydroxy-3-oxobutyl phosphate and 5-amino-6-(D-ribitylamino)uracil: step 1/2. Catalyzes the formation of 6,7-dimethyl-8-ribityllumazine by condensation of 5-amino-6-(D-ribitylamino)uracil with 3,4-dihydroxy-2-butanone 4-phosphate. This is the penultimate step in the biosynthesis of riboflavin. The chain is 6,7-dimethyl-8-ribityllumazine synthase from Vibrio vulnificus (strain CMCP6).